A 354-amino-acid polypeptide reads, in one-letter code: Stearoyl-CoA desaturase (354 aa).

The disordered stretch occupies residues M1–S28. Residues M1–V67 lie on the Cytoplasmic side of the membrane. Over residues E8–S28 the composition is skewed to low complexity. A helical membrane pass occupies residues W68–V88. Position 70 (N70) interacts with substrate. Over P89–K92 the chain is Lumenal. The helical transmembrane segment at V93–G113 threads the bilayer. The Cytoplasmic portion of the chain corresponds to V114–Y212. Residues H115 and H120 each coordinate Fe cation. A Histidine box-1 motif is present at residues H115–H120. Substrate contacts are provided by N143, R150, and D151. The Fe cation site is built by H152, H155, and H156. A Histidine box-2 motif is present at residues H152 to H156. The substrate site is built by R183 and K184. S198 is modified (phosphoserine). A helical transmembrane segment spans residues Y213–F232. The Lumenal portion of the chain corresponds to W233–A236. A helical transmembrane segment spans residues F237–L258. Residue W257 participates in substrate binding. The Cytoplasmic portion of the chain corresponds to V259–G354. H264, H293, H296, and H297 together coordinate Fe cation. A Histidine box-3 motif is present at residues H293 to H297.

The protein belongs to the fatty acid desaturase type 1 family. Requires Fe(2+) as cofactor.

The protein resides in the endoplasmic reticulum membrane. It carries out the reaction octadecanoyl-CoA + 2 Fe(II)-[cytochrome b5] + O2 + 2 H(+) = (9Z)-octadecenoyl-CoA + 2 Fe(III)-[cytochrome b5] + 2 H2O. It catalyses the reaction hexadecanoyl-CoA + 2 Fe(II)-[cytochrome b5] + O2 + 2 H(+) = (9Z)-hexadecenoyl-CoA + 2 Fe(III)-[cytochrome b5] + 2 H2O. Functionally, stearoyl-CoA desaturase that utilizes O(2) and electrons from reduced cytochrome b5 to introduce the first double bond into saturated fatty acyl-CoA substrates. Catalyzes the insertion of a cis double bond at the delta-9 position into fatty acyl-CoA substrates including palmitoyl-CoA and stearoyl-CoA. Gives rise to a mixture of 16:1 and 18:1 unsaturated fatty acids. Plays an important role in lipid biosynthesis. Plays an important role in regulating the expression of genes that are involved in lipogenesis and in regulating mitochondrial fatty acid oxidation. Plays an important role in body energy homeostasis. Contributes to the biosynthesis of membrane phospholipids, cholesterol esters and triglycerides. This is Stearoyl-CoA desaturase (SCD) from Mesocricetus auratus (Golden hamster).